Reading from the N-terminus, the 128-residue chain is Small ribosomal subunit protein uS14m (128 aa).

This sequence belongs to the universal ribosomal protein uS14 family. As to quaternary structure, component of the mitochondrial ribosome small subunit (28S) which comprises a 12S rRNA and about 30 distinct proteins. Interacts with LIAT1.

It is found in the mitochondrion. The protein is Small ribosomal subunit protein uS14m (Mrps14) of Mus musculus (Mouse).